A 147-amino-acid chain; its full sequence is Large ribosomal subunit protein uL13 (147 aa).

The protein belongs to the universal ribosomal protein uL13 family. In terms of assembly, part of the 50S ribosomal subunit.

Its function is as follows. This protein is one of the early assembly proteins of the 50S ribosomal subunit, although it is not seen to bind rRNA by itself. It is important during the early stages of 50S assembly. The sequence is that of Large ribosomal subunit protein uL13 from Ligilactobacillus salivarius (strain UCC118) (Lactobacillus salivarius).